Here is a 135-residue protein sequence, read N- to C-terminus: U-scoloptoxin(22)-Er1a (135 aa).

Residues 1–24 (MAVILKHLAIILLVFVIEIKMGQG) form the signal peptide. Residues 61–135 (PQITFSTDWG…RSPRYLPTII (75 aa)) form a disordered region. The segment covering 75–127 (SVNEDREAAERERSPQMKRSEHEEQLMAKDEMKRFQEERNPSSDDKIAIDKRS) has biased composition (basic and acidic residues).

Belongs to the scoloptoxin-22 family. Expressed by the venom gland.

Its subcellular location is the secreted. This is U-scoloptoxin(22)-Er1a from Ethmostigmus rubripes (Giant centipede).